The chain runs to 97 residues: MKMPKHNDNYQYPLDETWTTAEIIKVTTFYQAIEAANEGTIATADLLAAYRDFKTVVPAKSEEKRLARDYEAASGYRIYQTMRAAQETNKQRFQYRD.

Belongs to the UPF0223 family.

The sequence is that of UPF0223 protein lp_2149 from Lactiplantibacillus plantarum (strain ATCC BAA-793 / NCIMB 8826 / WCFS1) (Lactobacillus plantarum).